A 396-amino-acid chain; its full sequence is Tryptophan synthase beta chain (396 aa).

K88 is subject to N6-(pyridoxal phosphate)lysine.

This sequence belongs to the TrpB family. Tetramer of two alpha and two beta chains. Pyridoxal 5'-phosphate is required as a cofactor.

The enzyme catalyses (1S,2R)-1-C-(indol-3-yl)glycerol 3-phosphate + L-serine = D-glyceraldehyde 3-phosphate + L-tryptophan + H2O. Its pathway is amino-acid biosynthesis; L-tryptophan biosynthesis; L-tryptophan from chorismate: step 5/5. Functionally, the beta subunit is responsible for the synthesis of L-tryptophan from indole and L-serine. The chain is Tryptophan synthase beta chain from Leptospira biflexa serovar Patoc (strain Patoc 1 / Ames).